A 62-amino-acid chain; its full sequence is Toxin Tb2-II (62 aa).

The 62-residue stretch at 1–62 folds into the LCN-type CS-alpha/beta domain; that stretch reads KEGYAMDHEG…KVWDYATNKC (62 aa). 4 disulfide bridges follow: Cys-11/Cys-62, Cys-15/Cys-38, Cys-23/Cys-43, and Cys-27/Cys-45.

The protein belongs to the long (4 C-C) scorpion toxin superfamily. Sodium channel inhibitor family. Beta subfamily. Expressed by the venom gland.

It localises to the secreted. In terms of biological role, beta toxins bind voltage-independently at site-4 of sodium channels (Nav) and shift the voltage of activation toward more negative potentials thereby affecting sodium channel activation and promoting spontaneous and repetitive firing. This toxin is active against both mammals and insects. The sequence is that of Toxin Tb2-II from Tityus bahiensis (Brazilian scorpion).